We begin with the raw amino-acid sequence, 117 residues long: Phosphoribosyl-ATP pyrophosphatase (117 aa).

The protein belongs to the PRA-PH family.

The protein resides in the cytoplasm. The enzyme catalyses 1-(5-phospho-beta-D-ribosyl)-ATP + H2O = 1-(5-phospho-beta-D-ribosyl)-5'-AMP + diphosphate + H(+). The protein operates within amino-acid biosynthesis; L-histidine biosynthesis; L-histidine from 5-phospho-alpha-D-ribose 1-diphosphate: step 2/9. In Rhodospirillum rubrum (strain ATCC 11170 / ATH 1.1.1 / DSM 467 / LMG 4362 / NCIMB 8255 / S1), this protein is Phosphoribosyl-ATP pyrophosphatase.